The sequence spans 343 residues: Protein rax1 (343 aa).

Over 1 to 235 the chain is Cytoplasmic; that stretch reads MASAPRVSEV…NLNPLTCTGR (235 aa). An RGS domain is found at 109-228; the sequence is ELSNEQTINS…LNHKFKHNLN (120 aa). Residues 236–256 traverse the membrane as a helical segment; the sequence is FIIGYVSTFAAYWLGFCGIFL. Residues 257-263 are Extracellular-facing; the sequence is DYSRRKR. The helical transmembrane segment at 264–284 threads the bilayer; it reads VWTLLPFAFGFYNLICTWSKH. Over 285-317 the chain is Cytoplasmic; sequence DPVLALLGYSEVKPFHYEKVLQPSIRLSLNRRA. The chain crosses the membrane as a helical span at residues 318 to 338; it reads IFVLSIIVLIVGANTAIFSCV. At 339–343 the chain is on the extracellular side; that stretch reads PSIRL.

It localises to the cell membrane. The protein resides in the endoplasmic reticulum membrane. Its function is as follows. May be involved in cell polarization and division. This chain is Protein rax1 (rax1), found in Schizosaccharomyces pombe (strain 972 / ATCC 24843) (Fission yeast).